A 215-amino-acid chain; its full sequence is Glutathione S-transferase D4 (215 aa).

Residues 1-80 (MDFYYSPRSS…YLVEKYGKDD (80 aa)) enclose the GST N-terminal domain. Glutathione is bound by residues S9, 50 to 52 (HTI), and 64 to 66 (ESR). Positions 86–207 (DPQKRALINQ…KGLLQMKTMY (122 aa)) constitute a GST C-terminal domain.

Belongs to the GST superfamily. Delta family. As to quaternary structure, homodimer.

It carries out the reaction RX + glutathione = an S-substituted glutathione + a halide anion + H(+). In terms of biological role, conjugation of reduced glutathione to a wide number of exogenous and endogenous hydrophobic electrophiles. May be involved in detoxification. The polypeptide is Glutathione S-transferase D4 (Drosophila melanogaster (Fruit fly)).